The chain runs to 306 residues: Serrate RNA effector molecule homolog (306 aa).

The disordered stretch occupies residues 1–28 (HKEEELLGSSGGPPPEEPPKEGNPAEIN). Threonine 101 carries the phosphothreonine modification. Residue serine 109 is modified to Phosphoserine. A disordered region spans residues 251 to 284 (GPPYPHGPYGAGRGNYDAFRGQGGYPGKPRNRMV). Arginine 263, arginine 270, and arginine 280 each carry omega-N-methylarginine.

It belongs to the ARS2 family. Interacts with CASP8AP2, ERBB4, NCBP1/CBP80 and DROSHA. Interacts with LUZP4. Interacts with NCBP2/CBP20 and NCBP3.

It localises to the nucleus. Its subcellular location is the nucleoplasm. It is found in the cytoplasm. In terms of biological role, acts as a mediator between the cap-binding complex (CBC) and the primary microRNAs (miRNAs) processing machinery during cell proliferation. Contributes to the stability and delivery of capped primary miRNA transcripts to the primary miRNA processing complex containing DGCR8 and DROSHA, thereby playing a role in RNA-mediated gene silencing (RNAi) by miRNAs. Binds capped RNAs (m7GpppG-capped RNA); however interaction is probably mediated via its interaction with NCBP1/CBP80 component of the CBC complex. Involved in cell cycle progression at S phase. Does not directly confer arsenite resistance but rather modulates arsenic sensitivity. Independently of its activity on miRNAs, necessary and sufficient to promote neural stem cell self-renewal. Does so by directly binding SOX2 promoter and positively regulating its transcription. This is Serrate RNA effector molecule homolog (SRRT) from Cricetulus griseus (Chinese hamster).